The sequence spans 248 residues: Protein G1-like6 (248 aa).

Over residues M1–M15 the composition is skewed to basic residues. Disordered stretches follow at residues M1–Q35, G50–Q84, and A198–P248. The segment covering S17–G32 has biased composition (gly residues). Residues G50–G59 show a composition bias toward low complexity. A compositionally biased stretch (gly residues) spans T60–P69. The segment covering S70–S79 has biased composition (low complexity). Positions R80–K207 constitute an ALOG domain. Positions K205–K209 match the Nuclear localization signal motif. 2 stretches are compositionally biased toward low complexity: residues S212 to G224 and T239 to P248.

The protein belongs to the plant homeotic and developmental regulators ALOG protein family.

It localises to the nucleus. In terms of biological role, probable transcription regulator that acts as a developmental regulator by promoting cell growth in response to light. This is Protein G1-like6 from Oryza sativa subsp. indica (Rice).